The primary structure comprises 227 residues: UPF0758 protein Pcar_0065 (227 aa).

The region spanning 105–227 (RYTSPQAVFA…YVSLADRGVL (123 aa)) is the MPN domain. Zn(2+) is bound by residues histidine 176, histidine 178, and aspartate 189. The short motif at 176 to 189 (HNHPSGDPSPSRED) is the JAMM motif element.

Belongs to the UPF0758 family.

The protein is UPF0758 protein Pcar_0065 of Syntrophotalea carbinolica (strain DSM 2380 / NBRC 103641 / GraBd1) (Pelobacter carbinolicus).